The sequence spans 282 residues: Transcription repressor OFP18 (282 aa).

Positions 1 to 85 (MVRKMKLPFL…YSSFSSTSHA (85 aa)) are disordered. Low complexity predominate over residues 15-35 (SSSSFSSNSSSSSSSWPWPSS). Residues 36–47 (HQQNLKTISSKA) show a composition bias toward polar residues. Low complexity predominate over residues 66-85 (SFSSSPSSSSYSSFSSTSHA). The OVATE domain maps to 139–199 (LSLESNDPYT…FAAFVDLVLN (61 aa)).

In terms of tissue distribution, expressed in roots and shoots.

It is found in the nucleus. Its function is as follows. Transcriptional repressor that regulates multiple aspects of plant growth and development through the regulation of BEL1-LIKE (BLH) and KNOX TALE (KNAT) homeodomain transcription factors. This Arabidopsis thaliana (Mouse-ear cress) protein is Transcription repressor OFP18 (OFP18).